A 545-amino-acid chain; its full sequence is Toxin BC_0920 (545 aa).

In terms of domain architecture, LXG spans 1–217; that stretch reads MSLNMYLGEV…ARQAANSIEE (217 aa).

This sequence in the N-terminal section; belongs to the LXG family. It in the C-terminal section; belongs to the bacterial EndoU family. In terms of assembly, probably interacts with cognate immunity protein BC_0921. The interaction inhibits the toxic activity of BC_0921.

It is found in the secreted. Its function is as follows. Toxic component of an LXG toxin-immunity module. The C-terminus (residues 322-545) has RNase activity in E.coli which is neutralized by cognate immunity protein BC_0921, but not by immunity proteins specific to other toxins with the LXG domain. Degrades 5S rRNA and several tRNAs in vitro; cleavage is endonucleolytic within the anticodon loop for tRNA(GAU-Ile) and tRNA(UUC-Glu) but total for 5S rRNA and at least one other tRNA. RNase activity is suppressed by cognate immunity protein BC_0921. The polypeptide is Toxin BC_0920 (Bacillus cereus (strain ATCC 14579 / DSM 31 / CCUG 7414 / JCM 2152 / NBRC 15305 / NCIMB 9373 / NCTC 2599 / NRRL B-3711)).